The primary structure comprises 865 residues: Alanine--tRNA ligase (865 aa).

Zn(2+)-binding residues include H556, H560, C660, and H664.

Belongs to the class-II aminoacyl-tRNA synthetase family. Zn(2+) serves as cofactor.

The protein resides in the cytoplasm. It catalyses the reaction tRNA(Ala) + L-alanine + ATP = L-alanyl-tRNA(Ala) + AMP + diphosphate. Catalyzes the attachment of alanine to tRNA(Ala) in a two-step reaction: alanine is first activated by ATP to form Ala-AMP and then transferred to the acceptor end of tRNA(Ala). Also edits incorrectly charged Ser-tRNA(Ala) and Gly-tRNA(Ala) via its editing domain. This Vesicomyosocius okutanii subsp. Calyptogena okutanii (strain HA) protein is Alanine--tRNA ligase.